We begin with the raw amino-acid sequence, 219 residues long: MDGERKIKIALTKGRIEKEAVKIFERAGVDCSEVINKGRKLIFHNMESNIDFVLVKAPDVLTYVEHGVVDIGIVGKDTLLEQDKNFYEVLDLGFGKCKFSLAGLKDSNFYSGYNRKKIATKYPNVARSYFRKLGQDVEIIKIEGSVELAPILGLADAIVDIVETGSTLKENGLVIYKDICSISARMVVNMASMKMKKEEIEKIINKVQVQINEIEKAVR.

This sequence belongs to the ATP phosphoribosyltransferase family. Short subfamily. In terms of assembly, heteromultimer composed of HisG and HisZ subunits.

It localises to the cytoplasm. The catalysed reaction is 1-(5-phospho-beta-D-ribosyl)-ATP + diphosphate = 5-phospho-alpha-D-ribose 1-diphosphate + ATP. It functions in the pathway amino-acid biosynthesis; L-histidine biosynthesis; L-histidine from 5-phospho-alpha-D-ribose 1-diphosphate: step 1/9. Catalyzes the condensation of ATP and 5-phosphoribose 1-diphosphate to form N'-(5'-phosphoribosyl)-ATP (PR-ATP). Has a crucial role in the pathway because the rate of histidine biosynthesis seems to be controlled primarily by regulation of HisG enzymatic activity. This chain is ATP phosphoribosyltransferase, found in Clostridium kluyveri (strain NBRC 12016).